Consider the following 170-residue polypeptide: Cathelicidin antimicrobial peptide (170 aa).

The signal sequence occupies residues 1–30 (MKTQRDSPSLGRWSLVLLLLGLVMPLAIVA). The propeptide at 31–131 (QVLSYQEAVL…DISCDKDNRR (101 aa)) is cathelin-like domain (CLD). 2 disulfide bridges follow: C86/C97 and C108/C125. The tract at residues 150 to 162 (LKKVGQKIKDFLG) is active core.

It belongs to the cathelicidin family. As to quaternary structure, monomer, homodimer or homotrimer (in vitro). Oligomerizes as tetra- or hexamer in solution (in vitro). Post-translationally, proteolytically cleaved by proteinase PRTN3 into antibacterial peptide LL-37. Proteolytically cleaved by cathepsin CTSG and neutrophil elastase ELANE. In terms of processing, resistant to proteolytic degradation in solution, and when bound to both zwitterionic (mimicking mammalian membranes) and negatively charged membranes (mimicking bacterial membranes). After secretion onto the skin surface, the CAMP gene product is processed by a serine protease-dependent mechanism into multiple novel antimicrobial peptides distinct from and shorter than cathelicidin LL-37. These peptides show enhanced antimicrobial action, acquiring the ability to kill skin pathogens such as S.aureus, E.coli and C.albicans. These peptides have lost the ability to stimulate CXCL8/IL8 release from keratinocytes. The peptides act synergistically, killing bacteria at lower concentrations when present together, and maintain activity at increased salt condition.

It localises to the secreted. Its subcellular location is the vesicle. Functionally, antimicrobial protein that is an integral component of the innate immune system. Binds to bacterial lipopolysaccharides (LPS). Acts via neutrophil N-formyl peptide receptors to enhance the release of CXCL2. Postsecretory processing generates multiple cathelicidin antimicrobial peptides with various lengths which act as a topical antimicrobial defense in sweat on skin. The unprocessed precursor form, cathelicidin antimicrobial peptide, inhibits the growth of Gram-negative E.coli and E.aerogenes with efficiencies comparable to that of the mature peptide LL-37 (in vitro). Antimicrobial peptide that is an integral component of the innate immune system. Binds to bacterial lipopolysaccharides (LPS). Causes membrane permeabilization by forming transmembrane pores (in vitro). Causes lysis of E.coli. Exhibits antimicrobial activity against Gram-negative bacteria such as P.aeruginosa, S.typhimurium, E.aerogenes, E.coli and P.syringae, Gram-positive bacteria such as L.monocytogenes, S.epidermidis, S.pyogenes and S.aureus, as well as vancomycin-resistant enterococci (in vitro). Exhibits antimicrobial activity against methicillin-resistant S.aureus, P.mirabilis, and C.albicans in low-salt media, but not in media containing 100 mM NaCl (in vitro). Forms chiral supramolecular assemblies with quinolone signal (PQS) molecules of P.aeruginosa, which may lead to interference of bacterial quorum signaling and perturbance of bacterial biofilm formation. May form supramolecular fiber-like assemblies on bacterial membranes. Induces cytokine and chemokine producation as well as TNF/TNFA and CSF2/GMCSF production in normal human keratinocytes. Exhibits hemolytic activity against red blood cells. Its function is as follows. Exhibits antimicrobial activity against E.coli and B.megaterium (in vitro). The polypeptide is Cathelicidin antimicrobial peptide (Papio papio (Guinea baboon)).